The following is a 283-amino-acid chain: Adenylate dimethylallyltransferase (283 aa).

The protein belongs to the isopentenyl transferase family.

The enzyme catalyses dimethylallyl diphosphate + AMP = N(6)-(dimethylallyl)adenosine 5'-phosphate + diphosphate. Functionally, transfers dimethylallyl groups to AMP as part of the biosynthesis of cytokinin phytohormones like isopentenyl adenine or discadenine which controle spore formation and viability. This chain is Adenylate dimethylallyltransferase (iptA), found in Dictyostelium discoideum (Social amoeba).